Consider the following 371-residue polypeptide: Cytochrome b (371 aa).

4 helical membrane passes run 25 to 45 (FGSM…FLAV), 69 to 90 (WMMQ…YIHI), 105 to 125 (WMSG…GYVL), and 170 to 190 (FFAL…LHII). Heme b is bound by residues His75 and His89. His174 and His188 together coordinate heme b. His193 is an a ubiquinone binding site. A run of 4 helical transmembrane segments spans residues 218–238 (YKDL…VSFF), 280–300 (LGGA…PFTH), 312–332 (LSQL…WAAT), and 339–358 (YIII…ISMP).

The protein belongs to the cytochrome b family. In terms of assembly, the cytochrome bc1 complex contains 3 respiratory subunits (MT-CYB, CYC1 and UQCRFS1), 2 core proteins (UQCRC1 and UQCRC2) and probably 6 low-molecular weight proteins. It depends on heme b as a cofactor.

It localises to the mitochondrion inner membrane. In terms of biological role, component of the ubiquinol-cytochrome c reductase complex (complex III or cytochrome b-c1 complex) that is part of the mitochondrial respiratory chain. The b-c1 complex mediates electron transfer from ubiquinol to cytochrome c. Contributes to the generation of a proton gradient across the mitochondrial membrane that is then used for ATP synthesis. This Python molurus (Indian python) protein is Cytochrome b (MT-CYB).